The primary structure comprises 267 residues: Small ribosomal subunit protein uS3 (267 aa).

Positions 38-106 (IRKLLATGME…QVQLNILEVK (69 aa)) constitute a KH type-2 domain. The interval 215–267 (TAASAPAGDRDRPRRERPSRPRRSGSTGTTATSTEAGRAATAVVEAPAENQEG) is disordered. Over residues 222-233 (GDRDRPRRERPS) the composition is skewed to basic and acidic residues. The span at 238-256 (SGSTGTTATSTEAGRAATA) shows a compositional bias: low complexity.

It belongs to the universal ribosomal protein uS3 family. In terms of assembly, part of the 30S ribosomal subunit. Forms a tight complex with proteins S10 and S14.

Binds the lower part of the 30S subunit head. Binds mRNA in the 70S ribosome, positioning it for translation. The protein is Small ribosomal subunit protein uS3 of Nocardia farcinica (strain IFM 10152).